The sequence spans 263 residues: Ribonuclease HII (263 aa).

In terms of domain architecture, RNase H type-2 spans 74–262 (EHVAGLDEVG…VQETAATRQT (189 aa)). Asp80, Glu81, and Asp172 together coordinate a divalent metal cation.

The protein belongs to the RNase HII family. Mn(2+) is required as a cofactor. The cofactor is Mg(2+).

Its subcellular location is the cytoplasm. It catalyses the reaction Endonucleolytic cleavage to 5'-phosphomonoester.. Endonuclease that specifically degrades the RNA of RNA-DNA hybrids. The chain is Ribonuclease HII (rnhB) from Halalkalibacterium halodurans (strain ATCC BAA-125 / DSM 18197 / FERM 7344 / JCM 9153 / C-125) (Bacillus halodurans).